The sequence spans 221 residues: UPF0319 protein CGSHiEE_03630 (221 aa).

The N-terminal stretch at 1–21 (MKLRAVVLGLATLCTSTATFA) is a signal peptide.

It belongs to the UPF0319 family.

The polypeptide is UPF0319 protein CGSHiEE_03630 (Haemophilus influenzae (strain PittEE)).